The primary structure comprises 287 residues: T-cell ecto-ADP-ribosyltransferase 1 (287 aa).

A signal peptide spans 1 to 20; sequence MPSNNFKFFLTWWLTQQVTG. Disulfide bonds link C41/C246, C80/C201, and C141/C193. In terms of domain architecture, TR mART core spans 61–241; sequence EELKLEWEKA…ISLDSPKRKK (181 aa). Positions 98 and 146 each coordinate NAD(+). Residues R146 and S167 contribute to the active site. An N-linked (GlcNAc...) asparagine glycan is attached at N171. S202 is an NAD(+) binding site. Residue E209 is part of the active site. N256 carries an N-linked (GlcNAc...) asparagine glycan. A lipid anchor (GPI-anchor amidated serine) is attached at S258. A propeptide spans 259–287 (removed in mature form); sequence SLGSRESCVSLFLVVLLGLLVQQLTLAEP.

Belongs to the Arg-specific ADP-ribosyltransferase family. Post-translationally, it is proposed that in the absence of reducing agents, a disulfide bond is formed between Cys-80 and Cys-201, leading to a conformational change that reduces the catalytic rate of NAD glycohydrolysis. As to expression, expressed in spleen, intestine and thymus.

Its subcellular location is the cell membrane. The catalysed reaction is L-arginyl-[protein] + NAD(+) = N(omega)-(ADP-D-ribosyl)-L-arginyl-[protein] + nicotinamide + H(+). The enzyme catalyses NAD(+) + H2O = ADP-D-ribose + nicotinamide + H(+). In terms of biological role, has both ADP-ribosyltransferase activity and thiol-dependent NAD(+) glycohydrolase activity. The polypeptide is T-cell ecto-ADP-ribosyltransferase 1 (Art2a) (Mus musculus (Mouse)).